Here is a 483-residue protein sequence, read N- to C-terminus: Probable apyrase 3 (483 aa).

The Cytoplasmic portion of the chain corresponds to 1–29 (MTPETDALKVQILPKHQSLPYTVTKAKSK). Residues 30-50 (SLILLVVVSVTITLGLLLYVF) traverse the membrane as a helical; Signal-anchor for type II membrane protein segment. Over 51 to 483 (NSNSVISSGS…NGKSRKYLGF (433 aa)) the chain is Extracellular. 72–82 (VLIDAGSSGTR) contributes to the ATP binding site. E195 acts as the Proton acceptor in catalysis. 219 to 229 (GIVELGGASAQ) contributes to the ATP binding site. N250, N281, N305, and N326 each carry an N-linked (GlcNAc...) asparagine glycan.

This sequence belongs to the GDA1/CD39 NTPase family. It depends on Ca(2+) as a cofactor. As to expression, expressed in the initiation zone of lateral root and in the lateral root tip, the adaxial junction of lateral shoots with the stems, and in the abscission zone of flower organs. Not expressed in the rosette leaves.

It localises to the membrane. It catalyses the reaction a ribonucleoside 5'-triphosphate + 2 H2O = a ribonucleoside 5'-phosphate + 2 phosphate + 2 H(+). Functionally, catalyzes the hydrolysis of phosphoanhydride bonds of nucleoside tri- and di-phosphates. The polypeptide is Probable apyrase 3 (APY3) (Arabidopsis thaliana (Mouse-ear cress)).